A 284-amino-acid chain; its full sequence is Xyloglucan endotransglucosylase/hydrolase protein 22 (284 aa).

An N-terminal signal peptide occupies residues 1–21 (MAITYLLPLFLSLIITSSVSA). The 190-residue stretch at 22–211 (NFQRDVEITW…WSKAPFTASY (190 aa)) folds into the GH16 domain. Glu97 functions as the Nucleophile in the catalytic mechanism. The Proton donor role is filled by Glu101. Glu101 provides a ligand contact to xyloglucan. Asn105 carries N-linked (GlcNAc...) asparagine glycosylation. Xyloglucan-binding positions include 114 to 116 (HTN), 124 to 126 (DKE), 190 to 191 (DW), and Gly195. A disulfide bridge links Cys219 with Cys228. N-linked (GlcNAc...) asparagine glycosylation is present at Asn230. The cysteines at positions 267 and 281 are disulfide-linked. Arg272 is a binding site for xyloglucan.

The protein belongs to the glycosyl hydrolase 16 family. XTH group 2 subfamily. In terms of processing, contains at least one intrachain disulfide bond essential for its enzymatic activity. Post-translationally, N-glycosylated; essential for its enzymatic activity. As to expression, highly expressed. Predominantly expressed in green siliques. Expressed in young expanding leaves, trichomes, lateral root primordia, vascular tissue, abscission zones and elongating hypocols. Following wind stimulation, it decreases in the leaves of wind-stimulated plants, while it strongly increases in sites around cells of the pith parenchyma, between the vascular elements, and within the epidermis.

It localises to the secreted. The protein resides in the cell wall. It is found in the extracellular space. The protein localises to the apoplast. The enzyme catalyses breaks a beta-(1-&gt;4) bond in the backbone of a xyloglucan and transfers the xyloglucanyl segment on to O-4 of the non-reducing terminal glucose residue of an acceptor, which can be a xyloglucan or an oligosaccharide of xyloglucan.. In terms of biological role, catalyzes xyloglucan endohydrolysis (XEH) and/or endotransglycosylation (XET). Cleaves and religates xyloglucan polymers, an essential constituent of the primary cell wall, and thereby participates in cell wall construction of growing tissues. Its induction in case of mechanical stress, suggests that it may contribute in the adaptive changes in morphogenesis by being recruited to alter tissues tensil strength, or flexibility, enabling adaptation to mechanically stressful environments. This is Xyloglucan endotransglucosylase/hydrolase protein 22 (XTH22) from Arabidopsis thaliana (Mouse-ear cress).